The following is a 336-amino-acid chain: MIKIAINGYGRIGRNVLRALYESGRDKNIKIVAINELAAPEAMVHLTRFDTSHGRFRYPVQLAGHSMLVGEDLISLFAEQDPANLPWRALGVDVVLDCTGVFGSRADAELHLGAGAGKVLFSHPADADVDATIVYGVNHQVLTGRERIVSNASCTTNCVVPVIETLHREFEINCGTITTIHSAMHDQQVIDAYHSDLRRTRAASQSIIPVDTKLAKGLERILPHFAGKFEAIAVRVPTINVTAMDLSITVRKKVTVTDVNQALQRASRGTLSGILDYTEEPLVSVDFNHDAHSCIIDGTQTRVSDANLVKMLMWCDNEWGFANRMLDTTRAMMAAG.

11 to 12 (RI) lines the NAD(+) pocket. Substrate is bound by residues 153-155 (SCT), Arg-199, 212-213 (TK), and Arg-235. Cys-154 (nucleophile) is an active-site residue. Residue Asn-317 participates in NAD(+) binding.

The protein belongs to the glyceraldehyde-3-phosphate dehydrogenase family. Epd subfamily. In terms of assembly, homotetramer.

It localises to the cytoplasm. The enzyme catalyses D-erythrose 4-phosphate + NAD(+) + H2O = 4-phospho-D-erythronate + NADH + 2 H(+). Its pathway is cofactor biosynthesis; pyridoxine 5'-phosphate biosynthesis; pyridoxine 5'-phosphate from D-erythrose 4-phosphate: step 1/5. Its function is as follows. Catalyzes the NAD-dependent conversion of D-erythrose 4-phosphate to 4-phosphoerythronate. The sequence is that of D-erythrose-4-phosphate dehydrogenase from Aeromonas salmonicida (strain A449).